Consider the following 310-residue polypeptide: Ribose-phosphate pyrophosphokinase (310 aa).

ATP contacts are provided by residues 34–36 (DME) and 93–94 (RQ). 2 residues coordinate Mg(2+): H127 and D167. K190 is an active-site residue. Residues R192, D216, and 220-224 (DSGGT) contribute to the D-ribose 5-phosphate site.

Belongs to the ribose-phosphate pyrophosphokinase family. Class I subfamily. Homohexamer. Mg(2+) serves as cofactor.

Its subcellular location is the cytoplasm. The enzyme catalyses D-ribose 5-phosphate + ATP = 5-phospho-alpha-D-ribose 1-diphosphate + AMP + H(+). It participates in metabolic intermediate biosynthesis; 5-phospho-alpha-D-ribose 1-diphosphate biosynthesis; 5-phospho-alpha-D-ribose 1-diphosphate from D-ribose 5-phosphate (route I): step 1/1. Its function is as follows. Involved in the biosynthesis of the central metabolite phospho-alpha-D-ribosyl-1-pyrophosphate (PRPP) via the transfer of pyrophosphoryl group from ATP to 1-hydroxyl of ribose-5-phosphate (Rib-5-P). This Granulibacter bethesdensis (strain ATCC BAA-1260 / CGDNIH1) protein is Ribose-phosphate pyrophosphokinase.